Consider the following 358-residue polypeptide: tRNA-specific 2-thiouridylase MnmA (358 aa).

Residues 8–15 and Met34 each bind ATP; that span reads GLSGGVDS. Positions 94 to 96 are interaction with target base in tRNA; it reads NPD. Cys99 serves as the catalytic Nucleophile. Cys99 and Cys196 are joined by a disulfide. Gly123 lines the ATP pocket. The interaction with tRNA stretch occupies residues 146 to 148; that stretch reads KDQ. The active-site Cysteine persulfide intermediate is Cys196. The interval 308 to 309 is interaction with tRNA; that stretch reads RY.

Belongs to the MnmA/TRMU family.

It is found in the cytoplasm. It catalyses the reaction S-sulfanyl-L-cysteinyl-[protein] + uridine(34) in tRNA + AH2 + ATP = 2-thiouridine(34) in tRNA + L-cysteinyl-[protein] + A + AMP + diphosphate + H(+). Its function is as follows. Catalyzes the 2-thiolation of uridine at the wobble position (U34) of tRNA, leading to the formation of s(2)U34. This is tRNA-specific 2-thiouridylase MnmA from Thiobacillus denitrificans (strain ATCC 25259 / T1).